The sequence spans 902 residues: MKIAVIGQSLFGQEVYCHLRKEGHEVVGVFTVPDKDGKADPLGLEAEKDGVPVFKYSRWRAKGQALPDVVAKYQALGAELNVLPFCSQFIPMEIISAPRHGSIIYHPSLLPRHRGASAINWTLIHGDKKGGFSIFWADDGLDTGDLLLQKECEVLPDDTVSTLYNRFLFPEGIKGMVQAVRLIAEGKAPRLPQPEEGATYEGIQKKETAKINWDQPAEAIHNWIRGNDKVPGAWTEACEQKLTFFNSTLNTSGLVPEGDALPIPGAHRPGVVTKAGLILFGNDDKMLLVKNIQLEDGKMILASNFFKGAASSVLELTEAELVTAEAVRSVWQRILPKVLEVEDSTDFFKSGAASVDVVRLVEEVKELCDGLELENEDVYMASTFGDFIQLLVRKLRGDDEEGECSIDYVEMAVNKRTVRMPHQLFIGGEFVDAEGAKTSETINPTDGSVICQVSLAQVTDVDKAVAAAKDAFENGRWGKISARDRGRLMYRLADLMEQHQEELATIEALDAGAVYTLALKTHVGMSIQTFRYFAGWCDKIQGSTIPINQARPNRNLTLTRKEPVGVCGIIIPWNYPLMMLSWKTAACLAAGNTVVIKPAQVTPLTALKFAELTLKAGIPKGVVNVLPGSGSLVGQRLSDHPDVRKIGFTGSTEVGKHIMKSCAISNVKKVSLELGGKSPLIIFADCDLNKAVQMGMSSVFFNKGENCIAAGRLFVEDSIHDEFVRRVVEEVRKMKVGNPLDRDTDHGPQNHHAHLVKLMEYCQHGVKEGATLVCGGNQVPRPGFFFEPTVFTDVEDHMFIAKEESFGPVMIISRFADGDLDAVLSRANATEFGLASGVFTRDINKALYVSDKLQAGTVFVNTYNKTDVAAPFGGFKQSGFGKDLGEAALNEYLRVKTVTFEY.

Residues 1–310 form a hydrolase domain region; that stretch reads MKIAVIGQSL…LASNFFKGAA (310 aa). S9 carries the post-translational modification Phosphoserine. K38 is modified (N6-succinyllysine). 88-90 contacts (6R)-10-formyltetrahydrofolate; it reads QFI. H106 serves as the catalytic Proton donor. (6R)-10-formyltetrahydrofolate is bound at residue D142. Residues 318–395 enclose the Carrier domain; sequence EAELVTAEAV…DFIQLLVRKL (78 aa). Position 354 is an O-(pantetheine 4'-phosphoryl)serine (S354). Residues 417-902 are aldehyde dehydrogenase domain; it reads TVRMPHQLFI…LRVKTVTFEY (486 aa). NADP(+) contacts are provided by residues 571–573 and 597–600; these read IPW and KPAQ. S629 and S631 each carry phosphoserine. NADP(+) contacts are provided by residues 630–635 and 650–651; these read GSLVGQ and GS. Position 660 is an N6-succinyllysine (K660). E673 (proton acceptor) is an active-site residue. NADP(+) is bound at residue 673-674; the sequence is EL. C707 (proton donor) is an active-site residue. K757 serves as a coordination point for NADP(+). At K767 the chain carries N6-succinyllysine. 804 to 806 provides a ligand contact to NADP(+); sequence ESF. S825 carries the post-translational modification Phosphoserine. K882 is modified (N6-acetyllysine).

This sequence in the N-terminal section; belongs to the GART family. It in the C-terminal section; belongs to the aldehyde dehydrogenase family. ALDH1L subfamily. Homotetramer. In terms of processing, phosphopantetheinylation at Ser-354 by AASDHPPT is required for the formyltetrahydrofolate dehydrogenase activity. As to expression, highly expressed in liver, pancreas and kidney.

The protein resides in the cytoplasm. The protein localises to the cytosol. The enzyme catalyses (6R)-10-formyltetrahydrofolate + NADP(+) + H2O = (6S)-5,6,7,8-tetrahydrofolate + CO2 + NADPH + H(+). Cytosolic 10-formyltetrahydrofolate dehydrogenase that catalyzes the NADP(+)-dependent conversion of 10-formyltetrahydrofolate to tetrahydrofolate and carbon dioxide. May also have an NADP(+)-dependent aldehyde dehydrogenase activity towards formaldehyde, acetaldehyde, propionaldehyde, and benzaldehyde. This chain is Cytosolic 10-formyltetrahydrofolate dehydrogenase, found in Homo sapiens (Human).